Reading from the N-terminus, the 144-residue chain is Large ribosomal subunit protein uL15 (144 aa).

The interval 1 to 60 (MRLNSLRPAAGSRPDANRVGRGAGTGNGKTAGRGHKGQHSRSGGFTKVGFEGGQMPLQRR) is disordered. Gly residues predominate over residues 21–31 (RGAGTGNGKTA).

It belongs to the universal ribosomal protein uL15 family. Part of the 50S ribosomal subunit.

In terms of biological role, binds to the 23S rRNA. This chain is Large ribosomal subunit protein uL15, found in Alkalilimnicola ehrlichii (strain ATCC BAA-1101 / DSM 17681 / MLHE-1).